The chain runs to 181 residues: Adenine phosphoribosyltransferase (181 aa).

It belongs to the purine/pyrimidine phosphoribosyltransferase family. As to quaternary structure, homodimer.

It is found in the cytoplasm. It carries out the reaction AMP + diphosphate = 5-phospho-alpha-D-ribose 1-diphosphate + adenine. Its pathway is purine metabolism; AMP biosynthesis via salvage pathway; AMP from adenine: step 1/1. Its function is as follows. Catalyzes a salvage reaction resulting in the formation of AMP, that is energically less costly than de novo synthesis. The protein is Adenine phosphoribosyltransferase of Pseudoalteromonas translucida (strain TAC 125).